The following is a 544-amino-acid chain: Chaperonin GroEL (544 aa).

ATP is bound by residues 30–33 (TLGP), K51, 87–91 (DGTTT), G415, 481–483 (DAL), and D497.

This sequence belongs to the chaperonin (HSP60) family. Forms a cylinder of 14 subunits composed of two heptameric rings stacked back-to-back. Interacts with the co-chaperonin GroES.

It localises to the cytoplasm. The catalysed reaction is ATP + H2O + a folded polypeptide = ADP + phosphate + an unfolded polypeptide.. Functionally, together with its co-chaperonin GroES, plays an essential role in assisting protein folding. The GroEL-GroES system forms a nano-cage that allows encapsulation of the non-native substrate proteins and provides a physical environment optimized to promote and accelerate protein folding. The sequence is that of Chaperonin GroEL from Chlamydia felis (strain Fe/C-56) (Chlamydophila felis).